The following is a 346-amino-acid chain: uncharacterized protein (346 aa).

Residues 16-36 (ILGIIICIILIVGFFISFDST) traverse the membrane as a helical segment.

It is found in the membrane. This is an uncharacterized protein from Methanocaldococcus jannaschii (strain ATCC 43067 / DSM 2661 / JAL-1 / JCM 10045 / NBRC 100440) (Methanococcus jannaschii).